Consider the following 588-residue polypeptide: Serine/threonine-protein kinase CBK1 (588 aa).

Disordered stretches follow at residues 1 to 76 (MTDK…HQQQ) and 100 to 139 (QHQQQQQQPQQQSVAQQQPSDYVNFTPRPDLLSKTARDRA). Residues 29 to 42 (LYQQNSNQSNTSLD) show a composition bias toward polar residues. Composition is skewed to low complexity over residues 43 to 76 (QQQQFNQQQYNSQQQYQQQQHSQYQQQQQQHQQQ) and 100 to 117 (QHQQQQQQPQQQSVAQQQ). The 311-residue stretch at 207–517 (FVTVKVIGKG…ANEIKSHPFF (311 aa)) folds into the Protein kinase domain. Residues 213-221 (IGKGAFGEV) and Lys-236 each bind ATP. Asp-330 acts as the Proton acceptor in catalysis. The tract at residues 370 to 389 (GTSSNPATQMGPPQNTNRQS) is disordered. Residues 518-586 (RGVDWSSIRE…SRFDNMTRRN (69 aa)) enclose the AGC-kinase C-terminal domain.

It belongs to the protein kinase superfamily. STE Ser/Thr protein kinase family. COT1 subfamily.

The enzyme catalyses L-seryl-[protein] + ATP = O-phospho-L-seryl-[protein] + ADP + H(+). It carries out the reaction L-threonyl-[protein] + ATP = O-phospho-L-threonyl-[protein] + ADP + H(+). Functionally, protein kinase that seems to play a role in the regulation of cell morphogenesis and proliferation. This Yarrowia lipolytica (strain CLIB 122 / E 150) (Yeast) protein is Serine/threonine-protein kinase CBK1 (CBK1).